We begin with the raw amino-acid sequence, 2453 residues long: Nuclear receptor corepressor 1 (2453 aa).

Residues 1–29 (MSSSGYPPNQGAFSTEQSRYPSHSVQYTF) show a composition bias toward polar residues. Disordered stretches follow at residues 1–116 (MSSS…QVSD), 147–177 (PAFG…SKLS), and 206–231 (QQQL…VEQK). The interval 1–373 (MSSSGYPPNQ…QRGAGLSATI (373 aa)) is interaction with ZBTB33 and HEXIM1. The span at 51–64 (SQASQLLQQQQQQQ) shows a compositional bias: low complexity. 2 stretches are compositionally biased toward basic and acidic residues: residues 77–88 (PGSDRPQERRSG) and 99–116 (VDHD…QVSD). Phosphoserine is present on serine 172. Positions 174–216 (SKLSKEELIQSMDRVDREIAKVEQQILKLKKKQQQLEEEAAKP) form a coiled coil. A compositionally biased stretch (basic and acidic residues) spans 212–221 (EAAKPPEPEK). Serine 224 is subject to Phosphoserine. The segment at 254–312 (FEGLGPKVELPLYNQPSDTKVYHENIKTNQVMRKKLILFFKRRNHARKQREQKICQRYD) is interaction with SIN3A/B. Residues 299 to 328 (ARKQREQKICQRYDQLMEAWEKKVDRIENN) are a coiled coil. An SANT 1 domain is found at 435–486 (QFMNVWTDHEKEIFKDKFIQHPKNFGLIASYLERKSVPDCVLYYYLTKKNEN). 2 disordered regions span residues 497–631 (KRRG…TEEE) and 677–908 (LLQQ…PERQ). A coiled-coil region spans residues 501 to 550 (RNQQIARPSQEEKVEEKEEDKAEKTEKKEEEKKDDEEKDDKEDSKETTKE). Composition is skewed to basic and acidic residues over residues 509–531 (SQEE…KEEE) and 541–556 (KEDS…RTEA). A compositionally biased stretch (low complexity) spans 592 to 604 (EAAAANAAAAATE). The span at 605–616 (EPPPPLPPPPEP) shows a compositional bias: pro residues. The SANT 2 domain occupies 622 to 673 (VETSRWTEEEMEVAKKGLVEHGRNWAAIAKMVGTKSEAQCKNFYFNYKRRHN). Residues 697–707 (QCESVASTVSA) show a composition bias toward polar residues. Residues 708-727 (QEDEDIEASNEEENPEDSEG) are compositionally biased toward acidic residues. Residues 771–787 (TTDPAPCASPSSAVPTT) are compositionally biased toward low complexity. Over residues 851-885 (GEGDAKERDLESTSEKTEARDEDVVVAEQIERPEP) the composition is skewed to basic and acidic residues. Serine 1011 bears the Phosphoserine mark. The tract at residues 1034–1058 (VRLPTTRPTRPPPPLIPSSKTTVAS) is disordered. A Glycyl lysine isopeptide (Lys-Gly) (interchain with G-Cter in SUMO1); alternate cross-link involves residue lysine 1117. A Glycyl lysine isopeptide (Lys-Gly) (interchain with G-Cter in SUMO2); alternate cross-link involves residue lysine 1117. Serine 1122 bears the Phosphoserine mark. A Glycyl lysine isopeptide (Lys-Gly) (interchain with G-Cter in SUMO2) cross-link involves residue lysine 1195. Phosphoserine is present on residues serine 1206, serine 1207, serine 1274, serine 1292, and serine 1333. Lysine 1347 carries the N6-acetyllysine modification. Phosphothreonine is present on threonine 1378. Residue lysine 1400 forms a Glycyl lysine isopeptide (Lys-Gly) (interchain with G-Cter in SUMO2) linkage. Lysine 1423 participates in a covalent cross-link: Glycyl lysine isopeptide (Lys-Gly) (interchain with G-Cter in SUMO2); alternate. Lysine 1423 carries the post-translational modification N6-acetyllysine; alternate. The segment at 1450 to 1544 (GEPVRARHTS…SIPAKSPVPG (95 aa)) is disordered. 2 positions are modified to phosphoserine: serine 1459 and serine 1481. A compositionally biased stretch (polar residues) spans 1459–1469 (SVVSSGPSVLR). Over residues 1495–1514 (VSYQNTISRGSPMMNRTSDV) the composition is skewed to polar residues. The segment at 1510-2453 (RTSDVSSSKS…QYETLSDSDD (944 aa)) is interaction with C1D. A Glycyl lysine isopeptide (Lys-Gly) (interchain with G-Cter in SUMO2) cross-link involves residue lysine 1525. Position 1598 is a phosphoserine (serine 1598). Disordered stretches follow at residues 1697-1780 (RPYN…VRTQ) and 1902-1939 (ALPS…RTRG). 2 stretches are compositionally biased toward basic and acidic residues: residues 1718 to 1745 (AERE…RERI) and 1919 to 1937 (AGKD…ELRT). Residues 1949-1953 (IDVII) carry the CORNR box 1 motif. The tract at residues 1959–2060 (SDKDARERGS…SSQSEGMGQV (102 aa)) is disordered. The segment covering 1968 to 1979 (SQSSDSSSSLSS) has biased composition (low complexity). Phosphoserine is present on residues serine 1993 and serine 1997. The tract at residues 2050-2129 (PSSQSEGMGQ…QSQTVLHPRP (80 aa)) is ID1. A required for interaction with RARA in the absence of its ligand region spans residues 2065–2068 (RLIT). A CORNR box 2 motif is present at residues 2073-2077 (ICQII). Over residues 2088–2124 (SQASTSTFQTSPSALSSTPVRTKTSSRYSPESQSQTV) the composition is skewed to polar residues. The interval 2088 to 2174 (SQASTSTFQT…SPPQGPAVHE (87 aa)) is disordered. Serine 2116, serine 2134, serine 2150, serine 2165, and serine 2198 each carry phosphoserine. Positions 2138-2156 (LVDKSRGSRPGKSPERSHI) are enriched in basic and acidic residues. Positions 2226–2287 (IFRKLNSSGG…EDIIRKALMG (62 aa)) are ID2. The CORNR box 3 signature appears at 2277 to 2281 (LEDII). The segment at 2303–2396 (PVGIMPGSAS…RPSSTGSTQF (94 aa)) is disordered. The segment covering 2310 to 2319 (SASTSVVTSS) has biased composition (low complexity). Threonine 2412 is modified (phosphothreonine). 2 positions are modified to phosphoserine: serine 2449 and serine 2451.

This sequence belongs to the N-CoR nuclear receptor corepressors family. In terms of assembly, forms a large corepressor complex that contains SIN3A/B and histone deacetylases HDAC1 and HDAC2. This complex associates with the thyroid receptor (TR) and the retinoid acid receptor (RAR) in the absence of ligand. Interacts directly with RARA; the interaction is facilitated with RARA trimethylation. Component of the N-Cor repressor complex, at least composed of CBFA2T3, HEXIM1, NCOR1, NCOR2, HDAC3, TBL1X, TBL1XR1, CORO2A and GPS2. Interacts with ZBTB33; the interaction serves to recruit the N-CoR complex to promoter regions containing methylated CpG dinucleotides. Interacts with TRIM28 and KDM3A. Interacts (via the RD1 domain) with BAZ1A (via its N-terminal); the interaction corepresses a number of NCOR1-regulated genes. Interacts with BCL6, C1D, DACH1, HEXIM1, HDAC7, RORA, RORC, SAP30, SIAH2, SIN3A and SIN3B. May interact with DEAF1. Interacts with RXRA. Interacts with SETD5. Interacts with VDR. Interacts with ZBTB7A. Interacts with AR. Interacts with HDAC3. In terms of processing, ubiquitinated; mediated by SIAH2 and leading to its subsequent proteasomal degradation. In terms of tissue distribution, ubiquitous.

The protein localises to the nucleus. Its function is as follows. Mediates transcriptional repression by certain nuclear receptors. Part of a complex which promotes histone deacetylation and the formation of repressive chromatin structures which may impede the access of basal transcription factors. Participates in the transcriptional repressor activity produced by BCL6. Recruited by ZBTB7A to the androgen response elements/ARE on target genes, negatively regulates androgen receptor signaling and androgen-induced cell proliferation. Mediates the NR1D1-dependent repression and circadian regulation of TSHB expression. The NCOR1-HDAC3 complex regulates the circadian expression of the core clock gene ARTNL/BMAL1 and the genes involved in lipid metabolism in the liver. This is Nuclear receptor corepressor 1 (Ncor1) from Mus musculus (Mouse).